The sequence spans 210 residues: Redox-sensing transcriptional repressor Rex (210 aa).

Residues 17–56 (KYHRYLNELMKNDVDRISSKELGEKIGFTASQIRQDLNCF) constitute a DNA-binding region (H-T-H motif). 91–96 (GAGNIG) contributes to the NAD(+) binding site.

Belongs to the transcriptional regulatory Rex family. In terms of assembly, homodimer.

The protein localises to the cytoplasm. In terms of biological role, modulates transcription in response to changes in cellular NADH/NAD(+) redox state. The chain is Redox-sensing transcriptional repressor Rex from Clostridium botulinum (strain Alaska E43 / Type E3).